We begin with the raw amino-acid sequence, 628 residues long: MALSFSRDRTRPLPFAAEIGALGVVFGDIGTSPLYALKQGVLAVGGTNFLGGDVLGLLSLITWSIILSVTVKYVMLVLRADNDGEGGILALVTLLDLHRSALGMRWYLLAAGLLGAAMLIGDGVLTPAMSVLSAIEGLQVISPELEHWVVTLTVLVLLAVFLSQRLGTERIASFFGPIMLMWFGSLGALGVYGILQAPQVLAGLDPRYGIMLMVNHPGLAGVILGACFLAVTGGEALYADLGHFGRPVIARAWLFVAMPALLLNYFGQGAILLVDPNAVRNPFYDLCPDVFDIPLLFLATAATVIASQSIITGVFSLAKQAIELGYLPPMRIRYTSEHNEQHIYVGRLNWLLMIACIAVVLGFEASDRLASAYGIAVAFAMVTTSILFIAQVHRSWGWPAPAVWAMATGLLTIDFAFASANMTKIHDGGWLPLSIAAAIIFVMVSWRRGLEGVVAQQVRFTEPLDSFVARKDRVNDVEAPRTAIFLSRAGAMTPVALSRMADLLKVRFEKAVIVSVWIAARPRVSVEDRVKVTTLNEGFVRVDLRFGYMQQIDVPSVLGPALSARGIDPDAAIYVIGHERIIPPDEVTKIKDVVAHVFAFLARNAERSVDRFGLPRARTVEIGYPVKL.

12 helical membrane passes run Phe-15 to Tyr-35, Phe-49 to Val-69, Trp-106 to Thr-126, Ile-141 to Phe-161, Phe-174 to Ile-194, Ile-210 to Ala-230, Leu-254 to Val-274, Leu-295 to Phe-315, Ile-343 to Phe-363, Leu-369 to Ile-389, Trp-398 to Ala-418, and Ile-425 to Ser-445.

The protein belongs to the HAK/KUP transporter (TC 2.A.72) family.

It localises to the cell inner membrane. It carries out the reaction K(+)(in) + H(+)(in) = K(+)(out) + H(+)(out). Its function is as follows. Transport of potassium into the cell. Likely operates as a K(+):H(+) symporter. This is Probable potassium transport system protein Kup from Xanthobacter autotrophicus (strain ATCC BAA-1158 / Py2).